The following is a 416-amino-acid chain: MSDIVLHEDIPESLLPGGEAAAAATHTVEIDSHALNFGPQHPSAHGVLRLVLEMEGEVVARAIPHIGLLHRGTEKLIEYKTYPKALPYFDRLDYVSPMCEEQAFALATEKLLGIDIPDRAKWIRVMFAEITRILNHILNLTALGLDCGAVTPALWGYEEREKLIEFYEAASGARFHANYFRPGGVSRDLPAGLEDRIAEWARQFPAWIDDLESLLTNNRIWKQRTVGIGIFTTEQALAWGFSGPCLRASGVPWDLRRAQPYDNYDKVEFNIPVARQGDCYDRYLIRVAEMRESVRIVEQCLAQMKPGPIKIQDHKITPPPRREMKRSMEALIHHFKLFTEGYHVPPGATYTAVESPKGEFGVYLVADGSNRPYRCKIRPTGFAHLQAIDEMSRRHMLADAVAIIGSLDLVFGEIDR.

The protein belongs to the complex I 49 kDa subunit family. In terms of assembly, NDH-1 is composed of 14 different subunits. Subunits NuoB, C, D, E, F, and G constitute the peripheral sector of the complex.

The protein localises to the cell inner membrane. It carries out the reaction a quinone + NADH + 5 H(+)(in) = a quinol + NAD(+) + 4 H(+)(out). In terms of biological role, NDH-1 shuttles electrons from NADH, via FMN and iron-sulfur (Fe-S) centers, to quinones in the respiratory chain. The immediate electron acceptor for the enzyme in this species is believed to be ubiquinone. Couples the redox reaction to proton translocation (for every two electrons transferred, four hydrogen ions are translocated across the cytoplasmic membrane), and thus conserves the redox energy in a proton gradient. In Gluconacetobacter diazotrophicus (strain ATCC 49037 / DSM 5601 / CCUG 37298 / CIP 103539 / LMG 7603 / PAl5), this protein is NADH-quinone oxidoreductase subunit D.